The chain runs to 370 residues: Phospho-N-acetylmuramoyl-pentapeptide-transferase (370 aa).

Helical transmembrane passes span 3–23, 54–74, 79–99, 118–138, 161–181, 197–217, 238–258, 262–282, 290–310, and 341–361; these read QIII…PVLI, GLAI…YGLL, AFTA…AVGF, AKLI…LRFP, LAVG…YILI, LAAG…FWQF, LAVL…WNAA, IFMG…ISVT, IIIG…IVVF, and FWLL…GDWL.

It belongs to the glycosyltransferase 4 family. MraY subfamily. Mg(2+) is required as a cofactor.

Its subcellular location is the cell membrane. It catalyses the reaction UDP-N-acetyl-alpha-D-muramoyl-L-alanyl-gamma-D-glutamyl-meso-2,6-diaminopimeloyl-D-alanyl-D-alanine + di-trans,octa-cis-undecaprenyl phosphate = di-trans,octa-cis-undecaprenyl diphospho-N-acetyl-alpha-D-muramoyl-L-alanyl-D-glutamyl-meso-2,6-diaminopimeloyl-D-alanyl-D-alanine + UMP. The protein operates within cell wall biogenesis; peptidoglycan biosynthesis. Functionally, catalyzes the initial step of the lipid cycle reactions in the biosynthesis of the cell wall peptidoglycan: transfers peptidoglycan precursor phospho-MurNAc-pentapeptide from UDP-MurNAc-pentapeptide onto the lipid carrier undecaprenyl phosphate, yielding undecaprenyl-pyrophosphoryl-MurNAc-pentapeptide, known as lipid I. The sequence is that of Phospho-N-acetylmuramoyl-pentapeptide-transferase from Corynebacterium aurimucosum (strain ATCC 700975 / DSM 44827 / CIP 107346 / CN-1) (Corynebacterium nigricans).